The sequence spans 141 residues: 16 kDa protein (141 aa).

The tract at residues 100–119 (TVKKSRNSKPSKKKFKERKE) is disordered. The segment covering 102 to 115 (KKSRNSKPSKKKFK) has biased composition (basic residues).

This Tobacco rattle virus (strain PLB) protein is 16 kDa protein.